We begin with the raw amino-acid sequence, 418 residues long: 3-isopropylmalate dehydratase large subunit (418 aa).

C299, C359, and C362 together coordinate [4Fe-4S] cluster.

Belongs to the aconitase/IPM isomerase family. LeuC type 2 subfamily. Heterodimer of LeuC and LeuD. The cofactor is [4Fe-4S] cluster.

It catalyses the reaction (2R,3S)-3-isopropylmalate = (2S)-2-isopropylmalate. Its pathway is amino-acid biosynthesis; L-leucine biosynthesis; L-leucine from 3-methyl-2-oxobutanoate: step 2/4. Catalyzes the isomerization between 2-isopropylmalate and 3-isopropylmalate, via the formation of 2-isopropylmaleate. The protein is 3-isopropylmalate dehydratase large subunit of Nitratidesulfovibrio vulgaris (strain DSM 19637 / Miyazaki F) (Desulfovibrio vulgaris).